Reading from the N-terminus, the 109-residue chain is Glutaredoxin-8 (109 aa).

The Glutaredoxin domain occupies 5 to 109 (VTKAEEMIKS…EELTKIGLLP (105 aa)). Cys-25 and Cys-28 form a disulfide bridge.

Belongs to the glutaredoxin family. As to quaternary structure, monomer.

The protein localises to the cytoplasm. Glutathione-dependent oxidoreductase with lower activity compared to the other members of the glutaredoxin family. The disulfide bond functions as an electron carrier in the glutathione-dependent synthesis of deoxyribonucleotides by the enzyme ribonucleotide reductase. The sequence is that of Glutaredoxin-8 (GRX8) from Saccharomyces cerevisiae (strain ATCC 204508 / S288c) (Baker's yeast).